Here is a 444-residue protein sequence, read N- to C-terminus: EMI domain-containing protein 1 (444 aa).

An N-terminal signal peptide occupies residues 1–22 (MGGPRAWTLLCLGLLLPGGGAA). The 74-residue stretch at 33–106 (RRNWCSYVVT…PGHSGVTCEE (74 aa)) folds into the EMI domain. Cystine bridges form between cysteine 37/cysteine 96, cysteine 62/cysteine 68, and cysteine 95/cysteine 104. Threonine 42 is a glycosylation site (O-linked (Fuc) threonine). N-linked (GlcNAc...) asparagine glycosylation occurs at asparagine 51. A glycan (N-linked (GlcNAc...) asparagine) is linked at asparagine 136. Disordered stretches follow at residues 161 to 374 (EQTV…KSHW) and 404 to 444 (PDLG…SERS). Residues 221–371 (GPPGPQGPPG…PGPKGDPGEK (151 aa)) form the Collagen-like domain. Positions 222-231 (PPGPQGPPGR) are enriched in pro residues. Residues 232 to 243 (PGQTGAAGTPGK) are compositionally biased toward low complexity. Pro residues-rich tracts occupy residues 244 to 264 (MGPP…PVGP) and 292 to 311 (PTGP…PGLP).

As to quaternary structure, homo- or heteromers. O-fucosylated at Thr-42 within the EMI domain by FUT10/POFUT3 and FUT11/POFUT4.

Its subcellular location is the secreted. It localises to the extracellular space. It is found in the extracellular matrix. This chain is EMI domain-containing protein 1 (Emid1), found in Mus musculus (Mouse).